We begin with the raw amino-acid sequence, 522 residues long: tRNA-2-methylthio-N(6)-dimethylallyladenosine synthase (522 aa).

An MTTase N-terminal domain is found at 24 to 140 (RTYEVKTYGC…LPTLLQRAEH (117 aa)). 6 residues coordinate [4Fe-4S] cluster: cysteine 33, cysteine 69, cysteine 103, cysteine 177, cysteine 181, and cysteine 184. The Radical SAM core domain maps to 163–399 (RESAYAGWVS…MVVQEQVCEE (237 aa)). In terms of domain architecture, TRAM spans 402–473 (QKLIGTTVEL…PFFLIADSGV (72 aa)).

It belongs to the methylthiotransferase family. MiaB subfamily. As to quaternary structure, monomer. Requires [4Fe-4S] cluster as cofactor.

It is found in the cytoplasm. The catalysed reaction is N(6)-dimethylallyladenosine(37) in tRNA + (sulfur carrier)-SH + AH2 + 2 S-adenosyl-L-methionine = 2-methylsulfanyl-N(6)-dimethylallyladenosine(37) in tRNA + (sulfur carrier)-H + 5'-deoxyadenosine + L-methionine + A + S-adenosyl-L-homocysteine + 2 H(+). Catalyzes the methylthiolation of N6-(dimethylallyl)adenosine (i(6)A), leading to the formation of 2-methylthio-N6-(dimethylallyl)adenosine (ms(2)i(6)A) at position 37 in tRNAs that read codons beginning with uridine. The protein is tRNA-2-methylthio-N(6)-dimethylallyladenosine synthase of Corynebacterium glutamicum (strain ATCC 13032 / DSM 20300 / JCM 1318 / BCRC 11384 / CCUG 27702 / LMG 3730 / NBRC 12168 / NCIMB 10025 / NRRL B-2784 / 534).